We begin with the raw amino-acid sequence, 501 residues long: AKT kinase-transforming protein (501 aa).

The region spanning 26–129 (AIVKEGWLHK…WATAIQTVAD (104 aa)) is the PH domain. Positions 135–158 (EEETMDFRSGSPSDNSGAEEMEVS) are disordered. One can recognise a Protein kinase domain in the interval 171–429 (FEYLKLLGKG…AKEIMQHRFF (259 aa)). Residues 177-185 (LGKGTFGKV) and Lys-200 contribute to the ATP site. Residue Asp-295 is the Proton acceptor of the active site. Tyr-347 carries the phosphotyrosine modification. One can recognise an AGC-kinase C-terminal domain in the interval 430–501 (ANIVWQDVYE…QFSYSASGTA (72 aa)). The segment at 471–501 (TPPDQDDSMECVDSERRPHFPQFSYSASGTA) is disordered.

It belongs to the protein kinase superfamily. AGC Ser/Thr protein kinase family. RAC subfamily. In terms of assembly, interacts with mouse THEM4. Autophosphorylated on threonine and serine residues.

The catalysed reaction is L-seryl-[protein] + ATP = O-phospho-L-seryl-[protein] + ADP + H(+). The enzyme catalyses L-threonyl-[protein] + ATP = O-phospho-L-threonyl-[protein] + ADP + H(+). This chain is AKT kinase-transforming protein (V-AKT), found in Mus musculus (Mouse).